The following is a 269-amino-acid chain: 4-hydroxy-tetrahydrodipicolinate reductase (269 aa).

NAD(+)-binding positions include 8–13 (GAAGRM) and Glu-34. Arg-35 contacts NADP(+). Residues 98–100 (GTT) and 122–125 (APNY) each bind NAD(+). His-155 functions as the Proton donor/acceptor in the catalytic mechanism. His-156 is a (S)-2,3,4,5-tetrahydrodipicolinate binding site. Lys-159 functions as the Proton donor in the catalytic mechanism. 165-166 (GT) is a (S)-2,3,4,5-tetrahydrodipicolinate binding site.

Belongs to the DapB family.

Its subcellular location is the cytoplasm. It carries out the reaction (S)-2,3,4,5-tetrahydrodipicolinate + NAD(+) + H2O = (2S,4S)-4-hydroxy-2,3,4,5-tetrahydrodipicolinate + NADH + H(+). It catalyses the reaction (S)-2,3,4,5-tetrahydrodipicolinate + NADP(+) + H2O = (2S,4S)-4-hydroxy-2,3,4,5-tetrahydrodipicolinate + NADPH + H(+). It functions in the pathway amino-acid biosynthesis; L-lysine biosynthesis via DAP pathway; (S)-tetrahydrodipicolinate from L-aspartate: step 4/4. Its function is as follows. Catalyzes the conversion of 4-hydroxy-tetrahydrodipicolinate (HTPA) to tetrahydrodipicolinate. The sequence is that of 4-hydroxy-tetrahydrodipicolinate reductase from Vibrio atlanticus (strain LGP32) (Vibrio splendidus (strain Mel32)).